The primary structure comprises 153 residues: 3-hydroxyacyl-[acyl-carrier-protein] dehydratase FabZ (153 aa).

Residue His-57 is part of the active site.

This sequence belongs to the thioester dehydratase family. FabZ subfamily.

It localises to the cytoplasm. The enzyme catalyses a (3R)-hydroxyacyl-[ACP] = a (2E)-enoyl-[ACP] + H2O. Involved in unsaturated fatty acids biosynthesis. Catalyzes the dehydration of short chain beta-hydroxyacyl-ACPs and long chain saturated and unsaturated beta-hydroxyacyl-ACPs. The chain is 3-hydroxyacyl-[acyl-carrier-protein] dehydratase FabZ from Vibrio cholerae serotype O1 (strain ATCC 39315 / El Tor Inaba N16961).